The chain runs to 430 residues: F-box protein At1g49990 (430 aa).

The F-box domain occupies Met-1–Leu-45.

This chain is F-box protein At1g49990, found in Arabidopsis thaliana (Mouse-ear cress).